Here is a 331-residue protein sequence, read N- to C-terminus: Adenosine deaminase (331 aa).

Zn(2+)-binding residues include His-12 and His-14. Residues His-14, Asp-16, and Gly-170 each contribute to the substrate site. Residue His-197 participates in Zn(2+) binding. Glu-200 (proton donor) is an active-site residue. Asp-278 contacts Zn(2+). Position 279 (Asp-279) interacts with substrate.

Belongs to the metallo-dependent hydrolases superfamily. Adenosine and AMP deaminases family. Adenosine deaminase subfamily. Zn(2+) serves as cofactor.

The catalysed reaction is adenosine + H2O + H(+) = inosine + NH4(+). It carries out the reaction 2'-deoxyadenosine + H2O + H(+) = 2'-deoxyinosine + NH4(+). Catalyzes the hydrolytic deamination of adenosine and 2-deoxyadenosine. The polypeptide is Adenosine deaminase (Shewanella denitrificans (strain OS217 / ATCC BAA-1090 / DSM 15013)).